We begin with the raw amino-acid sequence, 247 residues long: Cytochrome c oxidase subunit 2 (247 aa).

The N-terminal stretch at 1–11 is a signal peptide; it reads MFYLLNSIIMN. The Mitochondrial intermembrane portion of the chain corresponds to 12-38; sequence DVPTPYGMYFQDSATPNQEGILELHDN. Residues 39 to 59 traverse the membrane as a helical segment; the sequence is IMFYLFIILGLVSWLLFTIVR. Over 60-78 the chain is Mitochondrial matrix; that stretch reads TYSKNPIAYKYIKHGQTIE. The helical transmembrane segment at 79 to 101 threads the bilayer; sequence IIWTIFPAVILLIIAFPSFILLY. Residues 102 to 247 are Mitochondrial intermembrane-facing; sequence LCDEVISPAM…PAFLEWLNEQ (146 aa). Residues histidine 182, cysteine 217, glutamate 219, cysteine 221, histidine 225, and methionine 228 each coordinate Cu cation. Mg(2+) is bound at residue glutamate 219.

Belongs to the cytochrome c oxidase subunit 2 family. As to quaternary structure, component of the cytochrome c oxidase (complex IV, CIV), a multisubunit enzyme composed of a catalytic core of 3 subunits and several supernumerary subunits. The complex exists as a monomer or a dimer and forms supercomplexes (SCs) in the inner mitochondrial membrane with ubiquinol-cytochrome c oxidoreductase (cytochrome b-c1 complex, complex III, CIII). It depends on Cu cation as a cofactor. In terms of processing, the signal sequence of COX2 is processed by IMP1.

The protein resides in the mitochondrion inner membrane. It carries out the reaction 4 Fe(II)-[cytochrome c] + O2 + 8 H(+)(in) = 4 Fe(III)-[cytochrome c] + 2 H2O + 4 H(+)(out). Component of the cytochrome c oxidase, the last enzyme in the mitochondrial electron transport chain which drives oxidative phosphorylation. The respiratory chain contains 3 multisubunit complexes succinate dehydrogenase (complex II, CII), ubiquinol-cytochrome c oxidoreductase (cytochrome b-c1 complex, complex III, CIII) and cytochrome c oxidase (complex IV, CIV), that cooperate to transfer electrons derived from NADH and succinate to molecular oxygen, creating an electrochemical gradient over the inner membrane that drives transmembrane transport and the ATP synthase. Cytochrome c oxidase is the component of the respiratory chain that catalyzes the reduction of oxygen to water. Electrons originating from reduced cytochrome c in the intermembrane space (IMS) are transferred via the dinuclear copper A center (CU(A)) of subunit 2 and heme A of subunit 1 to the active site in subunit 1, a binuclear center (BNC) formed by heme A3 and copper B (CU(B)). The BNC reduces molecular oxygen to 2 water molecules using 4 electrons from cytochrome c in the IMS and 4 protons from the mitochondrial matrix. The sequence is that of Cytochrome c oxidase subunit 2 (COX2) from Kluyveromyces lactis (strain ATCC 8585 / CBS 2359 / DSM 70799 / NBRC 1267 / NRRL Y-1140 / WM37) (Yeast).